The chain runs to 427 residues: UPF0229 protein YeaH (427 aa).

Residues 87–110 are disordered; the sequence is RIERSQGGGGGSGSGQGQASQDGE. The segment covering 92–102 has biased composition (gly residues); sequence QGGGGGSGSGQ.

The protein belongs to the UPF0229 family.

The polypeptide is UPF0229 protein YeaH (Escherichia coli O6:K15:H31 (strain 536 / UPEC)).